A 754-amino-acid chain; its full sequence is Nibrin (754 aa).

The FHA domain maps to 24 to 83 (YVVGRKNCAILIENDQSISRNHAVLTANFSVTNLSQTDEIPVLTLKDNSKYGTFVNEEKM). BRCT domains are found at residues 105-181 (KFRI…TEFL) and 224-315 (GKTF…LAVI). A mediates interaction with SP100 region spans residues 111 to 328 (EPLVACSSCL…TKNYCDPQGH (218 aa)). Residues 221 to 402 (IFKGKTFIFL…FRMLSQDAPT (182 aa)) form an interaction with MTOR, MAPKAP1 and RICTOR region. Ser278 is subject to Phosphoserine; by ATM. Positions 326–346 (QGHPSTGLKTTTPGPSLSQGV) are disordered. Positions 328-346 (HPSTGLKTTTPGPSLSQGV) are enriched in polar residues. Residue Thr337 is modified to Phosphothreonine. Phosphoserine; by ATM is present on Ser343. Phosphoserine is present on Ser347. At Lys388 the chain carries N6-lactoyllysine. Disordered regions lie at residues 396–415 (LSQD…NNNS) and 430–478 (QLSP…MSSC). Phosphoserine is present on Ser397. Residue Thr402 is modified to Phosphothreonine. Composition is skewed to polar residues over residues 430–440 (QLSPTKLPSIN) and 447–462 (SQQQ…FQPS). Ser432 carries the phosphoserine; by CDK2 modification. Residue Lys435 forms a Glycyl lysine isopeptide (Lys-Gly) (interchain with G-Cter in ubiquitin) linkage. The Nuclear localization signal motif lies at 461–467 (PSTKKRE). Phosphoserine occurs at positions 509 and 518. Residues Lys529, Lys571, and Lys582 each participate in a glycyl lysine isopeptide (Lys-Gly) (interchain with G-Cter in SUMO2) cross-link. 2 positions are modified to phosphoserine: Ser615 and Ser673. Residues Lys686, Lys690, and Lys735 each participate in a glycyl lysine isopeptide (Lys-Gly) (interchain with G-Cter in ubiquitin) cross-link. Positions 740 to 749 (ADDLFRYNPY) match the FxF/Y motif motif.

This sequence belongs to the Nibrin family. As to quaternary structure, component of the MRN complex composed of two heterodimers RAD50 and MRE11 associated with a single NBN. The MRN complexes dimerize on DNA to form joined MRN-MRN oligomers required for DNA double-strand break repair. As part of the MRN complex, interacts with MCM9; the interaction recruits the complex to DNA repair sites. Component of the BASC complex, at least composed of BRCA1, MSH2, MSH6, MLH1, ATM, BLM, RAD50, MRE11 and NBN. Interacts with histone H2AX; this requires phosphorylation of H2AX on 'Ser-139' and promotes NBN recruitment to DNA damage sites. Interacts with (phosphorylated) MDC1; promoting NBN recruitment to DNA damage sites. Interacts with (phosphorylated) RAD17; promoting NBN recruitment to DNA damage sites. Interacts (via FxF/Y motif) with ATM. Interacts with HJURP. Interacts with INTS3. Interacts with KPNA2. Interacts with TERF2; interaction is disrupted upon NBN phosphorylation by CDK2. Interacts with (phosphorylated) RBBP8/CtIP; the interaction links the role of the MRN complex in DNA double-strand break sensing to resection. Interacts with SP100; recruits NBN to PML bodies. Interacts with ATF2. Interacts with MTOR, MAPKAP1 isoform 2 and RICTOR; indicative for an association with the mTORC2 complex. Interacts with MRNIP. Interacts with UFL1; promoting UFL1 recruitment to double-strand breaks following DNA damage. Interacts with CYREN (via XLF motif). In terms of assembly, (Microbial infection) Interacts with herpes simplex virus 1 protein UL12. Post-translationally, phosphorylated by ATM in response of ionizing radiation, and such phosphorylation is responsible intra-S phase checkpoint control and telomere maintenance. Phosphorylated at Ser-432 by CDK2 in S/G2 phases abolishes interaction with TERF2, enabling DCLRE1B/Apollo recruitment to telomeres. Phosphorylation at Ser-432 in response to dysfunctional telomeres promotes non-homologous end joining repair at telomeres, while dephosphorylation by PPP1CA promotes microhomology-mediated end-joining (MMEJ) repair. In terms of processing, ubiquitinated at Lys-435 via 'Lys-6'-linked ubiquitin chains by RNF8, promoting NBN recruitment to DNA double-strand breaks (DSBs). Ubiquitinated at Lys-686 and Lys-689 via 'Lys-63'-linked ubiquitin chains by PELI1: ubiquitination takes place following PELI1 phosphorylation and promotes ATM activation and DNA repair. Ubiquitinated at Lys-735 via 'Lys-63'-linked ubiquitin chains by the SCF(SKP2) complex: ubiquitination takes place following SKP2 phosphorylation and promotes ATM activation and DNA repair. Lactylation at Lys-388 by KAT5 in response to DNA damage promotes recruitment of the MRN complex to DNA damage sites. Delactylated by HDAC3. In terms of tissue distribution, ubiquitous. Expressed at high levels in testis.

The protein resides in the nucleus. It localises to the chromosome. It is found in the PML body. The protein localises to the telomere. Component of the MRN complex, which plays a central role in double-strand break (DSB) repair, DNA recombination, maintenance of telomere integrity and meiosis. The MRN complex is involved in the repair of DNA double-strand breaks (DSBs) via homologous recombination (HR), an error-free mechanism which primarily occurs during S and G2 phases. The complex (1) mediates the end resection of damaged DNA, which generates proper single-stranded DNA, a key initial steps in HR, and is (2) required for the recruitment of other repair factors and efficient activation of ATM and ATR upon DNA damage. The MRN complex possesses single-strand endonuclease activity and double-strand-specific 3'-5' exonuclease activity, which are provided by MRE11, to initiate end resection, which is required for single-strand invasion and recombination. Within the MRN complex, NBN acts as a protein-protein adapter, which specifically recognizes and binds phosphorylated proteins, promoting their recruitment to DNA damage sites. Recruits MRE11 and RAD50 components of the MRN complex to DSBs in response to DNA damage. Promotes the recruitment of PI3/PI4-kinase family members ATM, ATR, and probably DNA-PKcs to the DNA damage sites, activating their functions. Mediates the recruitment of phosphorylated RBBP8/CtIP to DSBs, leading to cooperation between the MRN complex and RBBP8/CtIP to initiate end resection. RBBP8/CtIP specifically promotes the endonuclease activity of the MRN complex to clear DNA ends containing protein adducts. The MRN complex is also required for the processing of R-loops. NBN also functions in telomere length maintenance via its interaction with TERF2: interaction with TERF2 during G1 phase preventing recruitment of DCLRE1B/Apollo to telomeres. NBN also promotes DNA repair choice at dysfunctional telomeres: NBN phosphorylation by CDK2 promotes non-homologous end joining repair at telomeres, while unphosphorylated NBN promotes microhomology-mediated end-joining (MMEJ) repair. Enhances AKT1 phosphorylation possibly by association with the mTORC2 complex. This chain is Nibrin, found in Homo sapiens (Human).